Consider the following 301-residue polypeptide: MTFMDFEKLRHGTELIKRGFARMQKGGVIMDVTTPEQARIAEEAGAVAVMALQAVPADIRKAGGVARMADPEIVQQIIETVTIPVMAKARIGHFVEAEILEALGVDMVDESEVLTPADPFYHIDKTQFTVPFVCGARNLGEALRRINEGAAMIRTKGEAGTGDVSQAVKHMKQIQGEIRALAGKTKEELIMVAREIEAPIELVVETAKMQRLPVVNFAAGGVATPADAALMMRLGADGVFVGSGIFKAENPEKMAKAVVEAVNNYDNPVKLAEISKGVGAGMKGISADMIPAQEALQERGW.

Asp-31 is a binding site for D-ribose 5-phosphate. Catalysis depends on Lys-88, which acts as the Schiff-base intermediate with D-ribose 5-phosphate. Gly-160 serves as a coordination point for D-ribose 5-phosphate. Lys-172 lines the D-glyceraldehyde 3-phosphate pocket. Residues Gly-221 and 242–243 (GS) contribute to the D-ribose 5-phosphate site.

Belongs to the PdxS/SNZ family. In the presence of PdxT, forms a dodecamer of heterodimers.

It catalyses the reaction aldehydo-D-ribose 5-phosphate + D-glyceraldehyde 3-phosphate + L-glutamine = pyridoxal 5'-phosphate + L-glutamate + phosphate + 3 H2O + H(+). The protein operates within cofactor biosynthesis; pyridoxal 5'-phosphate biosynthesis. Catalyzes the formation of pyridoxal 5'-phosphate from ribose 5-phosphate (RBP), glyceraldehyde 3-phosphate (G3P) and ammonia. The ammonia is provided by the PdxT subunit. Can also use ribulose 5-phosphate and dihydroxyacetone phosphate as substrates, resulting from enzyme-catalyzed isomerization of RBP and G3P, respectively. This Methanosarcina acetivorans (strain ATCC 35395 / DSM 2834 / JCM 12185 / C2A) protein is Pyridoxal 5'-phosphate synthase subunit PdxS.